A 298-amino-acid chain; its full sequence is MVTPALQMKKPKQFCRRMGQKKQRPARAGQPHSSSDAAQAPAEQPHSSSDAAQAPCPRERCLGPPTTPGPYRSIYFSSPKGHLTRLGLEFFDQPAVPLARAFLGQVLVRRLPNGTELRGRIVETEAYLGPEDEAAHSRGGRQTPRNRGMFMKPGTLYVYIIYGMYFCMNISSQGDGACVLLRALEPLEGLETMRQLRSTLRKGTASRVLKDRELCSGPSKLCQALAINKSFDQRDLAQDEAVWLERGPLEPSEPAVVAAARVGVGHAGEWARKPLRFYVRGSPWVSVVDRVAEQDTQA.

Residues 1 to 17 constitute a mitochondrion transit peptide; that stretch reads MVTPALQMKKPKQFCRR. The segment at 1 to 65 is disordered; it reads MVTPALQMKK…CPRERCLGPP (65 aa). Positions 9–25 are enriched in basic residues; sequence KKPKQFCRRMGQKKQRP. Residues S78 and S252 each carry the phosphoserine modification.

The protein belongs to the DNA glycosylase MPG family. As to quaternary structure, binds MBD1. Binds SSBP1.

It localises to the cytoplasm. The protein localises to the mitochondrion matrix. Its subcellular location is the mitochondrion nucleoid. It is found in the nucleus. The catalysed reaction is Hydrolysis of alkylated DNA, releasing 3-methyladenine, 3-methylguanine, 7-methylguanine and 7-methyladenine.. Its activity is regulated as follows. Binding to SSBP1 in mitochondria inhibits glycosylase activity in the context of a single-stranded DNA (ssDNA), but not a double-stranded DNA (dsDNA) substrates. Hydrolysis of the deoxyribose N-glycosidic bond to excise 3-methyladenine, and 7-methylguanine from the damaged DNA polymer formed by alkylation lesions. The polypeptide is DNA-3-methyladenine glycosylase (MPG) (Homo sapiens (Human)).